The following is a 476-amino-acid chain: Cobyric acid synthase (476 aa).

The GATase cobBQ-type domain occupies 242-428; it reads AFRVVVPVPP…LHGLFDTPDA (187 aa). C323 (nucleophile) is an active-site residue. The active site involves H420.

The protein belongs to the CobB/CobQ family. CobQ subfamily.

Its pathway is cofactor biosynthesis; adenosylcobalamin biosynthesis. In terms of biological role, catalyzes amidations at positions B, D, E, and G on adenosylcobyrinic A,C-diamide. NH(2) groups are provided by glutamine, and one molecule of ATP is hydrogenolyzed for each amidation. This is Cobyric acid synthase from Janthinobacterium sp. (strain Marseille) (Minibacterium massiliensis).